Here is a 283-residue protein sequence, read N- to C-terminus: NFU1 iron-sulfur cluster scaffold homolog, mitochondrial (283 aa).

The N-terminal 65 residues, 1-65 (MSKFLSQAAI…ELRMPVACRR (65 aa)), are a transit peptide targeting the mitochondrion. The tract at residues 182 to 250 (IKELLDTRIR…IPEVESVEQV (69 aa)) is nifU. Residues C219 and C222 each coordinate [4Fe-4S] cluster.

Belongs to the NifU family.

Its subcellular location is the mitochondrion. In terms of biological role, molecular scaffold for [Fe-S] cluster assembly of mitochondrial iron-sulfur proteins. This is NFU1 iron-sulfur cluster scaffold homolog, mitochondrial from Drosophila sechellia (Fruit fly).